The following is a 273-amino-acid chain: Flagellin FljK (273 aa).

The protein belongs to the bacterial flagellin family. In C.crescentus, the flagellar filament is composed of multiple flagellins of 29 kDa; 27 kDa and 25 kDa.

Its subcellular location is the secreted. The protein localises to the bacterial flagellum. In terms of biological role, flagellin is the subunit protein which polymerizes to form the filaments of bacterial flagella. The polypeptide is Flagellin FljK (fljK) (Caulobacter vibrioides (strain ATCC 19089 / CIP 103742 / CB 15) (Caulobacter crescentus)).